The primary structure comprises 229 residues: Orotidine 5'-phosphate decarboxylase (229 aa).

Substrate-binding positions include aspartate 11, lysine 33, 60–69 (DLKFHDIPNT), threonine 119, arginine 180, glutamine 189, glycine 209, and arginine 210. Lysine 62 acts as the Proton donor in catalysis.

The protein belongs to the OMP decarboxylase family. Type 1 subfamily. In terms of assembly, homodimer.

It carries out the reaction orotidine 5'-phosphate + H(+) = UMP + CO2. It participates in pyrimidine metabolism; UMP biosynthesis via de novo pathway; UMP from orotate: step 2/2. Its function is as follows. Catalyzes the decarboxylation of orotidine 5'-monophosphate (OMP) to uridine 5'-monophosphate (UMP). In Dichelobacter nodosus (strain VCS1703A), this protein is Orotidine 5'-phosphate decarboxylase.